The following is a 1237-amino-acid chain: Zinc finger protein 687 (1237 aa).

Disordered regions lie at residues 1–80 (MGDM…PDIS) and 96–330 (EALA…PLKV). The segment covering 97–111 (ALAGGSAGDGAQAAG) has biased composition (low complexity). Phosphoserine occurs at positions 102, 129, and 140. Residues 132–144 (PSLPGTPHSPAPP) show a composition bias toward pro residues. A Phosphothreonine modification is found at Thr-148. 6 positions are modified to phosphoserine: Ser-227, Ser-242, Ser-251, Ser-253, Ser-266, and Ser-271. Over residues 234-244 (LAQQGSGSSPK) the composition is skewed to polar residues. Residue Lys-285 forms a Glycyl lysine isopeptide (Lys-Gly) (interchain with G-Cter in SUMO2) linkage. Over residues 297-310 (SSPGSPQSPSSGAE) the composition is skewed to low complexity. Residues Lys-336 and Lys-372 each participate in a glycyl lysine isopeptide (Lys-Gly) (interchain with G-Cter in SUMO2) cross-link. The residue at position 374 (Ser-374) is a Phosphoserine. The residue at position 377 (Thr-377) is a Phosphothreonine. Residues Lys-384, Lys-397, and Lys-422 each participate in a glycyl lysine isopeptide (Lys-Gly) (interchain with G-Cter in SUMO2) cross-link. Phosphoserine is present on Ser-433. Residues Lys-435, Lys-439, Lys-451, and Lys-464 each participate in a glycyl lysine isopeptide (Lys-Gly) (interchain with G-Cter in SUMO2) cross-link. At Ser-495 the chain carries Phosphoserine. The segment at 533–552 (YRCLECGDAFSLEKSLARHY) adopts a C2H2-type 1; degenerate zinc-finger fold. 5 consecutive C2H2-type zinc fingers follow at residues 705-727 (NVCP…QRMH), 764-787 (YRCP…QTSH), 792-815 (HKCP…YSQH), 827-849 (YKCA…FDQH), and 858-881 (FKCP…KNTH). Residues 880 to 890 (THQSGRLEETA) show a composition bias toward basic and acidic residues. Residues 880–957 (THQSGRLEET…LGSKGLKGGG (78 aa)) are disordered. Residue Thr-900 is modified to Phosphothreonine. Over residues 915 to 925 (AAPATEESSSS) the composition is skewed to low complexity. Residue Lys-954 forms a Glycyl lysine isopeptide (Lys-Gly) (interchain with G-Cter in SUMO2) linkage. 2 C2H2-type zinc fingers span residues 963-986 (WTCG…KKEH) and 993-1016 (FPCR…RVNH). Residue Lys-1043 forms a Glycyl lysine isopeptide (Lys-Gly) (interchain with G-Cter in SUMO2) linkage. Residues 1051–1121 (LQLGAQSPGR…LRYRSSSSTE (71 aa)) are disordered. Ser-1057 is modified (phosphoserine). Arg-1060 carries the omega-N-methylarginine modification. Ser-1082, Ser-1083, and Ser-1085 each carry phosphoserine. Arg-1101 carries the post-translational modification Omega-N-methylarginine. Residues Ser-1106 and Ser-1118 each carry the phosphoserine modification. A C2H2-type 9 zinc finger spans residues 1135–1158 (QQCLDCGLCFASPGSLSRHRFISH). The disordered stretch occupies residues 1159–1195 (KKRRGVGKASALGLGDGEEEAPPSRSDPDGGDSPLPA). Ser-1184, Ser-1191, and Ser-1211 each carry phosphoserine. Residues 1200–1222 (LTCKVCGKSCDSPLNLKTHFRTH) form a C2H2-type 10 zinc finger.

This sequence belongs to the krueppel C2H2-type zinc-finger protein family. Interacts with ZMYND8. As to expression, widely expressed with highest levels in obvary, muscle, blood and lung.

It is found in the cytoplasm. Its subcellular location is the nucleus. Its function is as follows. May be involved in transcriptional regulation. This Homo sapiens (Human) protein is Zinc finger protein 687 (ZNF687).